The sequence spans 347 residues: Bifunctional dihydroflavonol 4-reductase/flavanone 4-reductase (347 aa).

NADP(+) is bound by residues Lys-44 and Tyr-163.

The protein belongs to the NAD(P)-dependent epimerase/dehydratase family. Dihydroflavonol-4-reductase subfamily.

It catalyses the reaction a (2R,3S,4S)-leucoanthocyanidin + NADP(+) = a (2R,3R)-dihydroflavonol + NADPH + H(+). It carries out the reaction (2S)-flavan-4-ol + NADP(+) = (2S)-flavanone + NADPH + H(+). In terms of biological role, bifunctional enzyme involved in the flavonoid metabolism. May use dihydroquercetin, eriodictyol, garbanzol (5-deoxydihydrokaempferol), dihydrofisetin (5-deoxydihydroquercetin), dihydrokaempferol to a low extent (5%), but not naringenin, 5-deoxynaringenin or butin (5-deoxyeriodictyol) as substrate. This chain is Bifunctional dihydroflavonol 4-reductase/flavanone 4-reductase (DFR), found in Pyrus communis (Pear).